The chain runs to 201 residues: Akirin-2 (201 aa).

Phosphoserine occurs at positions 18 and 21. The Nuclear localization signal motif lies at 22–27 (PKRRRC). The residue at position 55 (Ser-55) is a Phosphoserine. Residues 198-201 (SYVS) carry the SYVS motif motif.

This sequence belongs to the akirin family. Homodimer. Interacts with IPO9; the interaction is direct. Associates with 20S and 26S proteasomes. Interacts with SMARCD1; promoting SWI/SNF complex recruitment. Interacts with NFKBIZ. Interacts with YWHAB. Post-translationally, polyubiquitinated. Polyubiquitination is dependent of UBR5 that extends pre-ubiquitinated AKIRIN2. As to expression, highly expressed in testis, cerebrum and cerebellum, and barely detectable in liver, heart, spleen and muscle. Also highly expressed in various tumor cells from hepatoma, glioblastoma and pheochromocytoma.

Its subcellular location is the nucleus. It is found in the cytoplasm. The protein localises to the membrane. Molecular adapter that acts as a bridge between a variety of multiprotein complexes, and which is involved in embryonic development, immunity, myogenesis and brain development. Plays a key role in nuclear protein degradation by promoting import of proteasomes into the nucleus: directly binds to fully assembled 20S proteasomes at one end and to nuclear import receptor IPO9 at the other end, bridging them together and mediating the import of pre-assembled proteasome complexes through the nuclear pore. Involved in innate immunity by regulating the production of interleukin-6 (IL6) downstream of Toll-like receptor (TLR): acts by bridging the NF-kappa-B inhibitor NFKBIZ and the SWI/SNF complex, leading to promote induction of IL6. Also involved in adaptive immunity by promoting B-cell activation. Involved in brain development: required for the survival and proliferation of cerebral cortical progenitor cells. Involved in myogenesis: required for skeletal muscle formation and skeletal development, possibly by regulating expression of muscle differentiation factors. Also plays a role in facilitating interdigital tissue regression during limb development. This chain is Akirin-2, found in Rattus norvegicus (Rat).